The primary structure comprises 156 residues: Small ribosomal subunit protein uS7 (156 aa).

This sequence belongs to the universal ribosomal protein uS7 family. As to quaternary structure, part of the 30S ribosomal subunit. Contacts proteins S9 and S11.

Functionally, one of the primary rRNA binding proteins, it binds directly to 16S rRNA where it nucleates assembly of the head domain of the 30S subunit. Is located at the subunit interface close to the decoding center, probably blocks exit of the E-site tRNA. The sequence is that of Small ribosomal subunit protein uS7 from Clostridium kluyveri (strain NBRC 12016).